The sequence spans 212 residues: KxDL motif-containing protein CG10681 (212 aa).

A disordered region spans residues 128 to 159 (RSSLAEEAEDDTEAQAKKTAETPAPAAAKPVL). The span at 148 to 157 (ETPAPAAAKP) shows a compositional bias: low complexity.

It belongs to the KXD1 family.

In Drosophila melanogaster (Fruit fly), this protein is KxDL motif-containing protein CG10681.